Here is a 331-residue protein sequence, read N- to C-terminus: Small ribosomal subunit protein uS2 (331 aa).

Belongs to the universal ribosomal protein uS2 family.

This Rhodopseudomonas palustris (strain ATCC BAA-98 / CGA009) protein is Small ribosomal subunit protein uS2.